Consider the following 622-residue polypeptide: Gamma tubulin complex adapter SPC72 (622 aa).

Disordered stretches follow at residues 1 to 58 (MVRR…PALM) and 221 to 263 (DKEE…IHDS). Over residues 228–238 (LAQSSPAGSQL) the composition is skewed to polar residues. Residues 239–250 (ESRDSPSSKEEN) show a composition bias toward basic and acidic residues.

Homooligomer. Interacts with CDC5, KAR1, KIN4, SPC97, SPC98, STU2 and TUB4. Phosphorylated by CDC5.

Its subcellular location is the cytoplasm. The protein localises to the cytoskeleton. It localises to the microtubule organizing center. It is found in the spindle pole body. Spindle pole body (SPB) component that acts as the gamma-tubulin complex-binding protein of the SPB outer plaque. Anchors cytoplasmic microtubules at the half bridge of the spindle pole body (SPB) and accordingly functions in nuclear position and spindle orientation, including anaphase spindle migration into the bud. Recruits KIN4 kinase to both SPBs when cytoplasmic microtubules are defective, to delay mitotic exit. Links cytoplasmic microtubules with spindle orientation checkpoint (SPOC) components and, therefore, could function as part of the sensors of spindle orientation defects. Required for cytoplasmic astral microtubule growth during mitosis. Is strictly required for mating and karyogamy. This Saccharomyces cerevisiae (strain ATCC 204508 / S288c) (Baker's yeast) protein is Gamma tubulin complex adapter SPC72 (SPC72).